The primary structure comprises 671 residues: UvrABC system protein C (671 aa).

The disordered stretch occupies residues 1 to 20 (MPHLPDSMSPEAPAGPAPAT). Residues 10-20 (PEAPAGPAPAT) show a composition bias toward low complexity. In terms of domain architecture, GIY-YIG spans 37–115 (PLPGVYRYFD…IKTLNPKYNI (79 aa)). Residues 232-267 (RQVMEALEARMMAHAEKLEFEQAAELRNQVAALSNV) enclose the UVR domain.

It belongs to the UvrC family. In terms of assembly, interacts with UvrB in an incision complex.

It is found in the cytoplasm. Functionally, the UvrABC repair system catalyzes the recognition and processing of DNA lesions. UvrC both incises the 5' and 3' sides of the lesion. The N-terminal half is responsible for the 3' incision and the C-terminal half is responsible for the 5' incision. This is UvrABC system protein C from Albidiferax ferrireducens (strain ATCC BAA-621 / DSM 15236 / T118) (Rhodoferax ferrireducens).